The chain runs to 210 residues: Glycerol-3-phosphate acyltransferase 2 (210 aa).

6 helical membrane-spanning segments follow: residues 4 to 24, 54 to 74, 82 to 102, 114 to 134, 141 to 161, and 163 to 183; these read LIMV…PAPY, FWPG…AMAV, LGIQ…PVWL, IGIL…CFLV, FPTL…WLGQ, and DLGK…MYIP.

It belongs to the PlsY family. In terms of assembly, probably interacts with PlsX.

The protein resides in the cell membrane. The enzyme catalyses an acyl phosphate + sn-glycerol 3-phosphate = a 1-acyl-sn-glycero-3-phosphate + phosphate. Its pathway is lipid metabolism; phospholipid metabolism. Functionally, catalyzes the transfer of an acyl group from acyl-phosphate (acyl-PO(4)) to glycerol-3-phosphate (G3P) to form lysophosphatidic acid (LPA). This enzyme utilizes acyl-phosphate as fatty acyl donor, but not acyl-CoA or acyl-ACP. This chain is Glycerol-3-phosphate acyltransferase 2, found in Dehalococcoides mccartyi (strain ATCC BAA-2266 / KCTC 15142 / 195) (Dehalococcoides ethenogenes (strain 195)).